The following is a 173-amino-acid chain: Putative metal-dependent hydrolase OB0413 (173 aa).

Positions 64, 155, and 159 each coordinate Zn(2+).

It belongs to the metal hydrolase YfiT family. As to quaternary structure, homodimer. Zn(2+) is required as a cofactor.

It localises to the cytoplasm. Functionally, possible metal-dependent hydrolase. This is Putative metal-dependent hydrolase OB0413 from Oceanobacillus iheyensis (strain DSM 14371 / CIP 107618 / JCM 11309 / KCTC 3954 / HTE831).